Here is a 528-residue protein sequence, read N- to C-terminus: J domain-containing protein APJ1 (528 aa).

Positions 4-73 (NTSLYDSLNV…RALYDQYGTT (70 aa)) constitute a J domain. A CR-type zinc finger spans residues 193 to 274 (GKTAKLGLNR…CQGLGFIKER (82 aa)). CXXCXGXG motif repeat units follow at residues 206–213 (CSVCDGHG), 218–225 (CTCKTCKG), 246–253 (CADCGGAG), and 262–269 (CQQCQGLG). Positions 485 to 499 (NERDSRKRNNRRFDE) are enriched in basic and acidic residues. Positions 485–528 (NERDSRKRNNRRFDESNINNNNETKRNKYSSPVSGFYDHDINGY) are disordered.

The protein resides in the cytoplasm. It localises to the nucleus. Its function is as follows. Putative chaperone involved in protein folding. Interferes with propagation of [PSI+] prion when overproduced. The polypeptide is J domain-containing protein APJ1 (APJ1) (Saccharomyces cerevisiae (strain ATCC 204508 / S288c) (Baker's yeast)).